A 954-amino-acid chain; its full sequence is Kinesin-like protein KIN-7A (954 aa).

The tract at residues 1–29 is disordered; the sequence is MGVSRPPSTPASKIERTPMSTPTPGGSTR. Positions 17 to 28 are enriched in low complexity; sequence TPMSTPTPGGST. The Kinesin motor domain occupies 34-354; that stretch reads KIFVTVRVRP…LFFATCAKEV (321 aa). Residue 119-126 participates in ATP binding; that stretch reads GQTSSGKT. Coiled coils occupy residues 363–436 and 480–588; these read VVSD…GDNQ and LKHE…LVMS. Disordered stretches follow at residues 624-689 and 741-762; these read PNLI…SSVN and GKTN…DGPD. The segment covering 630 to 639 has biased composition (low complexity); the sequence is PCSPLSSSRP. 2 stretches are compositionally biased toward basic and acidic residues: residues 640 to 660 and 666 to 681; these read LEPE…EGSE and KSED…ETPR.

It belongs to the TRAFAC class myosin-kinesin ATPase superfamily. Kinesin family. KIN-7 subfamily. In terms of tissue distribution, ubiquitous with a preferential expression in the shoot apical meristem (SAM).

Functionally, may be essential to promote the progression of cytokinesis during node-internode differentiation. This is Kinesin-like protein KIN-7A from Oryza sativa subsp. japonica (Rice).